Consider the following 120-residue polypeptide: uncharacterized protein (120 aa).

An RING-type zinc finger spans residues 70–109 (CARCRRSLTLTPAVSCLPCGHSCLCTDCDQLFANVCFECK).

This is an uncharacterized protein from Orgyia pseudotsugata multicapsid polyhedrosis virus (OpMNPV).